A 340-amino-acid chain; its full sequence is Dihydroorotate dehydrogenase (quinone) (340 aa).

FMN contacts are provided by residues 62 to 66 (AGLDK) and threonine 86. Position 66 (lysine 66) interacts with substrate. Residue 111 to 115 (NRMGF) participates in substrate binding. The FMN site is built by asparagine 139 and asparagine 172. Asparagine 172 lines the substrate pocket. Serine 175 (nucleophile) is an active-site residue. Substrate is bound at residue asparagine 177. FMN contacts are provided by lysine 217 and threonine 245. 246–247 (NT) is a binding site for substrate. Residues glycine 268, glycine 297, and 318 to 319 (YS) each bind FMN.

This sequence belongs to the dihydroorotate dehydrogenase family. Type 2 subfamily. In terms of assembly, monomer. The cofactor is FMN.

The protein localises to the cell membrane. The enzyme catalyses (S)-dihydroorotate + a quinone = orotate + a quinol. It participates in pyrimidine metabolism; UMP biosynthesis via de novo pathway; orotate from (S)-dihydroorotate (quinone route): step 1/1. Its function is as follows. Catalyzes the conversion of dihydroorotate to orotate with quinone as electron acceptor. This Alkalilimnicola ehrlichii (strain ATCC BAA-1101 / DSM 17681 / MLHE-1) protein is Dihydroorotate dehydrogenase (quinone).